A 414-amino-acid chain; its full sequence is Putative competence-damage inducible protein (414 aa).

Belongs to the CinA family.

In Clostridium novyi (strain NT), this protein is Putative competence-damage inducible protein.